The chain runs to 185 residues: Ribosome-recycling factor (185 aa).

This sequence belongs to the RRF family.

The protein localises to the cytoplasm. Functionally, responsible for the release of ribosomes from messenger RNA at the termination of protein biosynthesis. May increase the efficiency of translation by recycling ribosomes from one round of translation to another. The sequence is that of Ribosome-recycling factor from Vibrio campbellii (strain ATCC BAA-1116).